The chain runs to 414 residues: Multifunctional CCA protein (414 aa).

ATP contacts are provided by Gly8 and Arg11. 2 residues coordinate CTP: Gly8 and Arg11. Mg(2+) is bound by residues Asp21 and Asp23. ATP is bound by residues Arg91, Arg137, and Arg140. CTP-binding residues include Arg91, Arg137, and Arg140. The 102-residue stretch at 228–329 folds into the HD domain; that stretch reads TGIHTLMTLA…LKLFDAVDVW (102 aa).

Belongs to the tRNA nucleotidyltransferase/poly(A) polymerase family. Bacterial CCA-adding enzyme type 1 subfamily. Monomer. Can also form homodimers and oligomers. Mg(2+) serves as cofactor. Ni(2+) is required as a cofactor.

It catalyses the reaction a tRNA precursor + 2 CTP + ATP = a tRNA with a 3' CCA end + 3 diphosphate. It carries out the reaction a tRNA with a 3' CCA end + 2 CTP + ATP = a tRNA with a 3' CCACCA end + 3 diphosphate. Functionally, catalyzes the addition and repair of the essential 3'-terminal CCA sequence in tRNAs without using a nucleic acid template. Adds these three nucleotides in the order of C, C, and A to the tRNA nucleotide-73, using CTP and ATP as substrates and producing inorganic pyrophosphate. tRNA 3'-terminal CCA addition is required both for tRNA processing and repair. Also involved in tRNA surveillance by mediating tandem CCA addition to generate a CCACCA at the 3' terminus of unstable tRNAs. While stable tRNAs receive only 3'-terminal CCA, unstable tRNAs are marked with CCACCA and rapidly degraded. The chain is Multifunctional CCA protein from Serratia proteamaculans (strain 568).